A 956-amino-acid polypeptide reads, in one-letter code: Glutamate receptor ionotropic, kainate 4 (956 aa).

Residues 1-20 (MPRVSAPLVLLPAWLLMVAC) form the signal peptide. The Extracellular portion of the chain corresponds to 21–545 (SPHSLRIAAI…YFSFLDPFSP (525 aa)). N-linked (GlcNAc...) asparagine glycosylation is found at N158, N220, N272, N286, N323, N408, N415, and N479. Residues G500, T502, and R507 each contribute to the L-glutamate site. A helical transmembrane segment spans residues 546-566 (GVWLFMLLAYLAVSCVLFLVA). Residues 567-623 (RLTPYEWYSPHPCAQGRCNLLVNQYSLGNSLWFPVGGFMQQGSTIAPRALSTRCVSG) lie on the Cytoplasmic side of the membrane. The chain crosses the membrane as a helical span at residues 624-644 (VWWAFTLIIISSYTANLAAFL). Topologically, residues 645 to 804 (TVQRMEVPIE…HRAKGLGMEN (160 aa)) are extracellular. L-glutamate-binding residues include S674, S675, and E723. N-linked (GlcNAc...) asparagine glycosylation occurs at N736. Residues 805 to 825 (IGGIFVVLICGLIVAIFMAML) form a helical membrane-spanning segment. Residues 826 to 956 (EFLWTLRHSE…DKTTNSSEPE (131 aa)) lie on the Cytoplasmic side of the membrane. The tract at residues 931-956 (LRARPSPARSEESLEWDKTTNSSEPE) is disordered. Residues 939–948 (RSEESLEWDK) are compositionally biased toward basic and acidic residues.

This sequence belongs to the glutamate-gated ion channel (TC 1.A.10.1) family. GRIK4 subfamily. In terms of assembly, homodimer. Can form functional heteromeric receptors with GRIK1, GRIK2 and GRIK3 subunits. Forms a heteromeric complex with GRIK2. In terms of tissue distribution, expressed in the hippocampus and cerebellum (at protein level).

It localises to the cell membrane. Its subcellular location is the postsynaptic cell membrane. The protein resides in the presynaptic cell membrane. Functionally, ionotropic glutamate receptor that functions as a cation-permeable ligand-gated ion channel. Cannot form functional channels on its own and produces channel activity only in heteromeric assembly with GRIK1, GRIK2 and GRIK3 subunits. This is Glutamate receptor ionotropic, kainate 4 (Grik4) from Mus musculus (Mouse).